The chain runs to 289 residues: ATP synthase subunit a (289 aa).

The next 6 helical transmembrane spans lie at 43 to 63 (AFHV…LFIF), 104 to 124 (IAPL…IDLV), 160 to 180 (ISVF…GGFL), 193 to 213 (IVVQ…TLIA), 232 to 252 (IFIL…ALGV), and 259 to 279 (AVFH…LTIV).

It belongs to the ATPase A chain family. In terms of assembly, F-type ATPases have 2 components, CF(1) - the catalytic core - and CF(0) - the membrane proton channel. CF(1) has five subunits: alpha(3), beta(3), gamma(1), delta(1), epsilon(1). CF(0) has three main subunits: a(1), b(2) and c(9-12). The alpha and beta chains form an alternating ring which encloses part of the gamma chain. CF(1) is attached to CF(0) by a central stalk formed by the gamma and epsilon chains, while a peripheral stalk is formed by the delta and b chains.

The protein localises to the cell inner membrane. Key component of the proton channel; it plays a direct role in the translocation of protons across the membrane. The sequence is that of ATP synthase subunit a from Pseudomonas paraeruginosa (strain DSM 24068 / PA7) (Pseudomonas aeruginosa (strain PA7)).